The following is a 379-amino-acid chain: MAKKDYYEILGLDKGASDQDIKKAFRKLALKYHPDRNPNDKKAEEKFKEINEAYQVLTDPQKKAQYDQFGTTDFNGGGFQGGFGGFDFSDLGGFGDIFDSFFGGGFSSGRRKNGPERGSDLEYTLSLTFEEAVFGVEKEISVTRNERCETCNGTGAKKGSHPHTCDKCNGTGQVRHQRSTPLGNFVTMTTCDKCGGRGTIIKNPCEECRGKGIVRKHRKIKVKVPAGVDTGNIIPIRGQGEHGKNGGPSGDLYINLRVSPHSKFKRKGFDIYLDAHISFGKAALGTSLKVPSIDGDVKYEIPPGTQPGTVFRLKGKGVPKVDGRGRGDQYVNVIVDIPKNLNEKQKEALMMFMEASGEIQPRDVEKKSFIDKIFKNDSK.

Residues 5–70 (DYYEILGLDK…QKKAQYDQFG (66 aa)) enclose the J domain. The CR-type zinc finger occupies 135–217 (GVEKEISVTR…CRGKGIVRKH (83 aa)). Zn(2+) is bound by residues C148, C151, C165, C168, C191, C194, C205, and C208. 4 CXXCXGXG motif repeats span residues 148 to 155 (CETCNGTG), 165 to 172 (CDKCNGTG), 191 to 198 (CDKCGGRG), and 205 to 212 (CEECRGKG).

It belongs to the DnaJ family. As to quaternary structure, homodimer. The cofactor is Zn(2+).

The protein resides in the cytoplasm. Participates actively in the response to hyperosmotic and heat shock by preventing the aggregation of stress-denatured proteins and by disaggregating proteins, also in an autonomous, DnaK-independent fashion. Unfolded proteins bind initially to DnaJ; upon interaction with the DnaJ-bound protein, DnaK hydrolyzes its bound ATP, resulting in the formation of a stable complex. GrpE releases ADP from DnaK; ATP binding to DnaK triggers the release of the substrate protein, thus completing the reaction cycle. Several rounds of ATP-dependent interactions between DnaJ, DnaK and GrpE are required for fully efficient folding. Also involved, together with DnaK and GrpE, in the DNA replication of plasmids through activation of initiation proteins. In Clostridium kluyveri (strain ATCC 8527 / DSM 555 / NBRC 12016 / NCIMB 10680 / K1), this protein is Chaperone protein DnaJ.